Reading from the N-terminus, the 456-residue chain is Bifunctional protein GlmU (456 aa).

Positions 1–231 are pyrophosphorylase; it reads MERTCLAIIL…EEELTGCNTR (231 aa). UDP-N-acetyl-alpha-D-glucosamine contacts are provided by residues 10–13, Lys24, Gln77, and 82–83; these read LAAG and GT. Asp107 provides a ligand contact to Mg(2+). UDP-N-acetyl-alpha-D-glucosamine-binding residues include Gly143, Glu157, Asn172, and Asn229. Asn229 is a Mg(2+) binding site. Residues 232–252 form a linker region; sequence AELAYIERLWQQRRRQELMLA. Positions 253-456 are N-acetyltransferase; that stretch reads GVSMVAPETV…AARKKVKAAE (204 aa). 2 residues coordinate UDP-N-acetyl-alpha-D-glucosamine: Arg318 and Lys336. His348 (proton acceptor) is an active-site residue. 2 residues coordinate UDP-N-acetyl-alpha-D-glucosamine: Tyr351 and Asn362. Acetyl-CoA is bound by residues Ala365, 371–372, Ser390, Ser408, and Arg425; that span reads NY.

The protein in the N-terminal section; belongs to the N-acetylglucosamine-1-phosphate uridyltransferase family. It in the C-terminal section; belongs to the transferase hexapeptide repeat family. Homotrimer. Requires Mg(2+) as cofactor.

It localises to the cytoplasm. The enzyme catalyses alpha-D-glucosamine 1-phosphate + acetyl-CoA = N-acetyl-alpha-D-glucosamine 1-phosphate + CoA + H(+). It catalyses the reaction N-acetyl-alpha-D-glucosamine 1-phosphate + UTP + H(+) = UDP-N-acetyl-alpha-D-glucosamine + diphosphate. It functions in the pathway nucleotide-sugar biosynthesis; UDP-N-acetyl-alpha-D-glucosamine biosynthesis; N-acetyl-alpha-D-glucosamine 1-phosphate from alpha-D-glucosamine 6-phosphate (route II): step 2/2. Its pathway is nucleotide-sugar biosynthesis; UDP-N-acetyl-alpha-D-glucosamine biosynthesis; UDP-N-acetyl-alpha-D-glucosamine from N-acetyl-alpha-D-glucosamine 1-phosphate: step 1/1. The protein operates within bacterial outer membrane biogenesis; LPS lipid A biosynthesis. Its function is as follows. Catalyzes the last two sequential reactions in the de novo biosynthetic pathway for UDP-N-acetylglucosamine (UDP-GlcNAc). The C-terminal domain catalyzes the transfer of acetyl group from acetyl coenzyme A to glucosamine-1-phosphate (GlcN-1-P) to produce N-acetylglucosamine-1-phosphate (GlcNAc-1-P), which is converted into UDP-GlcNAc by the transfer of uridine 5-monophosphate (from uridine 5-triphosphate), a reaction catalyzed by the N-terminal domain. This chain is Bifunctional protein GlmU, found in Sinorhizobium fredii (strain NBRC 101917 / NGR234).